The sequence spans 451 residues: 3-phosphoshikimate 1-carboxyvinyltransferase (451 aa).

3-phosphoshikimate-binding residues include lysine 28, serine 29, and arginine 33. Lysine 28 lines the phosphoenolpyruvate pocket. Phosphoenolpyruvate contacts are provided by glycine 105 and arginine 133. The 3-phosphoshikimate site is built by serine 178, glutamine 180, aspartate 331, and lysine 358. Position 180 (glutamine 180) interacts with phosphoenolpyruvate. Catalysis depends on aspartate 331, which acts as the Proton acceptor. 2 residues coordinate phosphoenolpyruvate: arginine 362 and arginine 406.

Belongs to the EPSP synthase family. As to quaternary structure, monomer.

The protein resides in the cytoplasm. It carries out the reaction 3-phosphoshikimate + phosphoenolpyruvate = 5-O-(1-carboxyvinyl)-3-phosphoshikimate + phosphate. Its pathway is metabolic intermediate biosynthesis; chorismate biosynthesis; chorismate from D-erythrose 4-phosphate and phosphoenolpyruvate: step 6/7. Its function is as follows. Catalyzes the transfer of the enolpyruvyl moiety of phosphoenolpyruvate (PEP) to the 5-hydroxyl of shikimate-3-phosphate (S3P) to produce enolpyruvyl shikimate-3-phosphate and inorganic phosphate. The chain is 3-phosphoshikimate 1-carboxyvinyltransferase from Rhodospirillum rubrum (strain ATCC 11170 / ATH 1.1.1 / DSM 467 / LMG 4362 / NCIMB 8255 / S1).